The primary structure comprises 272 residues: Alkaline ceramidase (272 aa).

Transmembrane regions (helical) follow at residues 34-54 (FANTCTNLPIIVLPLVNIMLL) and 61-81 (VNGGLVFPQLLLTFNGLASTY). Position 83 (His-83) interacts with Zn(2+). 4 helical membrane passes run 96-116 (LSLVWIITVFLVVYIPVMKWF), 124-144 (LTVVRWVVLIVTAVVSALCFL), 148-168 (LNAIALMLFSIPAAVVIRYEG), and 183-203 (ILALWGVAFSFWFADRLLCDF). Zn(2+) contacts are provided by His-213 and His-217. The chain crosses the membrane as a helical span at residues 214–234 (ALFHLLAGLAGYTIFIMFSMI). N-linked (GlcNAc...) asparagine glycosylation is present at Asn-256.

This sequence belongs to the alkaline ceramidase family. It depends on Zn(2+) as a cofactor.

The protein resides in the membrane. The enzyme catalyses an N-acylsphing-4-enine + H2O = sphing-4-enine + a fatty acid. Functionally, hydrolyzes the sphingolipid ceramide into sphingosine and free fatty acid. The sequence is that of Alkaline ceramidase from Caenorhabditis briggsae.